Here is a 387-residue protein sequence, read N- to C-terminus: Lymphocyte transmembrane adapter 1 (387 aa).

Residues 1-37 (MDVTTSAWSETTRRISEPSTLQGTLGSLDKAEDHSSS) are Extracellular-facing. A helical; Signal-anchor for type III membrane protein transmembrane segment spans residues 38-58 (IFSGFAALLAILLVVAVICVL). At 59 to 387 (WCCGKRKKRQ…VCAAEAGARG (329 aa)) the chain is on the cytoplasmic side. A disordered region spans residues 114-136 (VSTESLLSRNSDSPSSEHVPSRA). Positions 118–129 (SLLSRNSDSPSS) are enriched in low complexity. A Phosphotyrosine modification is found at Tyr195. Residues 230 to 268 (SEEIDEGCGNASDCTSLGSPGTENSDPLSDGEGSSQTSN) form a disordered region. The span at 241-268 (SDCTSLGSPGTENSDPLSDGEGSSQTSN) shows a compositional bias: polar residues. Phosphotyrosine is present on residues Tyr270 and Tyr296. Residues 294-387 (RDYENVPPGP…VCAAEAGARG (94 aa)) form a disordered region. Residues 319-329 (DHVEGRTDGPE) are compositionally biased toward basic and acidic residues. Positions 360-369 (PWEDAEETSS) are enriched in acidic residues. The residue at position 375 (Tyr375) is a Phosphotyrosine.

In terms of assembly, when phosphorylated, interacts with GRB2, PIK3R1 and GRAP2. Phosphorylated on tyrosines upon TCR or BCR activation; which leads to the recruitment of GRB2, PIK3R1 and GRAP2.

The protein resides in the cell membrane. Negatively regulates TCR (T-cell antigen receptor)-mediated signaling in T-cells and BCR (B-cell antigen receptor)-mediated signaling in B-cells. The sequence is that of Lymphocyte transmembrane adapter 1 (LAX1) from Bos taurus (Bovine).